Consider the following 469-residue polypeptide: Cysteine--tRNA ligase (469 aa).

Cys-28 contacts Zn(2+). A 'HIGH' region motif is present at residues 30–40 (PTVYNYIHIGN). Residues Cys-213, His-238, and Glu-242 each coordinate Zn(2+). The 'KMSKS' region signature appears at 270-274 (KMSKS). Lys-273 provides a ligand contact to ATP.

This sequence belongs to the class-I aminoacyl-tRNA synthetase family. Monomer. Zn(2+) serves as cofactor.

It localises to the cytoplasm. It catalyses the reaction tRNA(Cys) + L-cysteine + ATP = L-cysteinyl-tRNA(Cys) + AMP + diphosphate. The sequence is that of Cysteine--tRNA ligase from Leuconostoc citreum (strain KM20).